Consider the following 123-residue polypeptide: Large ribosomal subunit protein bL12 (123 aa).

The protein belongs to the bacterial ribosomal protein bL12 family. As to quaternary structure, homodimer. Part of the ribosomal stalk of the 50S ribosomal subunit. Forms a multimeric L10(L12)X complex, where L10 forms an elongated spine to which 2 to 4 L12 dimers bind in a sequential fashion. Binds GTP-bound translation factors.

Functionally, forms part of the ribosomal stalk which helps the ribosome interact with GTP-bound translation factors. Is thus essential for accurate translation. The protein is Large ribosomal subunit protein bL12 of Wigglesworthia glossinidia brevipalpis.